We begin with the raw amino-acid sequence, 240 residues long: UDP-2,3-diacylglucosamine hydrolase (240 aa).

D8, H10, D41, N79, and H114 together coordinate Mn(2+). 79-80 serves as a coordination point for substrate; that stretch reads NR. Residues D122, S160, N164, K167, and H195 each coordinate substrate. Mn(2+) contacts are provided by H195 and H197.

It belongs to the LpxH family. Mn(2+) serves as cofactor.

The protein resides in the cell inner membrane. The catalysed reaction is UDP-2-N,3-O-bis[(3R)-3-hydroxytetradecanoyl]-alpha-D-glucosamine + H2O = 2-N,3-O-bis[(3R)-3-hydroxytetradecanoyl]-alpha-D-glucosaminyl 1-phosphate + UMP + 2 H(+). Its pathway is glycolipid biosynthesis; lipid IV(A) biosynthesis; lipid IV(A) from (3R)-3-hydroxytetradecanoyl-[acyl-carrier-protein] and UDP-N-acetyl-alpha-D-glucosamine: step 4/6. Functionally, hydrolyzes the pyrophosphate bond of UDP-2,3-diacylglucosamine to yield 2,3-diacylglucosamine 1-phosphate (lipid X) and UMP by catalyzing the attack of water at the alpha-P atom. Involved in the biosynthesis of lipid A, a phosphorylated glycolipid that anchors the lipopolysaccharide to the outer membrane of the cell. The chain is UDP-2,3-diacylglucosamine hydrolase from Escherichia coli O7:K1 (strain IAI39 / ExPEC).